A 607-amino-acid chain; its full sequence is ATP-dependent DNA helicase II subunit 1 (607 aa).

The Ku domain maps to 241 to 452 (MDLGNDVRIG…IETMQRILRG (212 aa)). The 35-residue stretch at 570-604 (IKALKVSQLKDILRDRGLRVSGKKADLLDNLTNYV) folds into the SAP domain.

Belongs to the ku70 family. Heterodimer of pku70 and pku80.

Its subcellular location is the nucleus. It is found in the chromosome. The protein localises to the telomere. It carries out the reaction ATP + H2O = ADP + phosphate + H(+). Functionally, single-stranded DNA-dependent ATP-dependent helicase. Involved in non-homologous end joining (NHEJ) DNA double strand break repair. DNA-binding is sequence-independent but has a high affinity to nicks in double-stranded DNA and to the ends of duplex DNA. Binds to naturally occurring chromosomal ends, and therefore provides chromosomal end protection. Required also for telomere recombination to repair telomeric ends in the absence of telomerase. ku70, of the ku70/ku80 heterodimer, binds to the stem loop of tlc1, the RNA component of telomerase. Required for mating-type switching. Involved in telomere maintenance. Interacts with telomeric repeats and subtelomeric sequences thereby controlling telomere length and protecting against subtelomeric rearrangement. Maintains telomeric chromatin, which is involved in silencing the expression of genes located at the telomere. This Schizosaccharomyces pombe (strain 972 / ATCC 24843) (Fission yeast) protein is ATP-dependent DNA helicase II subunit 1 (pku70).